Reading from the N-terminus, the 574-residue chain is Cell division cycle 7-related protein kinase (574 aa).

Residue serine 27 is modified to Phosphoserine. One can recognise a Protein kinase domain in the interval 58 to 574 (FKIEDKIGEG…LHPFFKDMSL (517 aa)). ATP-binding positions include 64–72 (IGEGTFSSV) and lysine 90. Aspartate 177 (proton acceptor) is an active-site residue. A Glycyl lysine isopeptide (Lys-Gly) (interchain with G-Cter in SUMO2) cross-link involves residue lysine 268. A Phosphothreonine modification is found at threonine 503.

Belongs to the protein kinase superfamily. Ser/Thr protein kinase family. CDC7 subfamily. In terms of assembly, forms a complex with either DBF4/DBF4A or DBF4B, leading to the activation of the kinase activity. Interacts with CLASPIN (via the acidic patch); the interaction is required for phosphorylation of MCM proteins and CLASPIN. The cofactor is Mg(2+).

It is found in the nucleus. The enzyme catalyses L-seryl-[protein] + ATP = O-phospho-L-seryl-[protein] + ADP + H(+). The catalysed reaction is L-threonyl-[protein] + ATP = O-phospho-L-threonyl-[protein] + ADP + H(+). Functionally, kinase involved in initiation of DNA replication. Phosphorylates critical substrates that regulate the G1/S phase transition and initiation of DNA replication, such as MCM proteins and CLASPIN. The polypeptide is Cell division cycle 7-related protein kinase (Homo sapiens (Human)).